We begin with the raw amino-acid sequence, 145 residues long: Granulysin (145 aa).

A signal peptide spans 1 to 22 (MATWALLLLAAMLLGNPGLVFS). One can recognise a Saposin B-type domain in the interval 62–142 (LGRDYRTCLT…EDLRLCIPST (81 aa)). 2 disulfides stabilise this stretch: cysteine 69–cysteine 132 and cysteine 96–cysteine 107.

A 9 kDa form is produced by proteolytic processing of a 15 kDa protein. In terms of tissue distribution, expressed in natural killer and T-cells.

Its subcellular location is the secreted. Antimicrobial protein that kills intracellular pathogens. Active against a broad range of microbes, including Gram-positive and Gram-negative bacteria, fungi, and parasites. Kills Mycobacterium tuberculosis. The sequence is that of Granulysin (GNLY) from Homo sapiens (Human).